An 82-amino-acid chain; its full sequence is Conotoxin Gla-TxX (82 aa).

The first 25 residues, 1-25, serve as a signal peptide directing secretion; the sequence is MSGHTSVSFLLLSIVALGMVATVIC. 5 positions are modified to 4-carboxyglutamate: Glu-30, Glu-34, Glu-37, Glu-40, and Glu-41. Asn-72 is subject to Asparagine amide. A propeptide spanning residues 77-82 is cleaved from the precursor; sequence LIHMQK.

In terms of processing, contains 4 disulfide bonds. Expressed by the venom duct.

It localises to the secreted. The chain is Conotoxin Gla-TxX from Conus textile (Cloth-of-gold cone).